The chain runs to 184 residues: Regulatory protein RecX (184 aa).

The interval 1–21 (MTLFPLPSTSDPAEADESTKR) is disordered.

The protein belongs to the RecX family.

It localises to the cytoplasm. Functionally, modulates RecA activity. The sequence is that of Regulatory protein RecX from Mycolicibacterium vanbaalenii (strain DSM 7251 / JCM 13017 / BCRC 16820 / KCTC 9966 / NRRL B-24157 / PYR-1) (Mycobacterium vanbaalenii).